A 301-amino-acid polypeptide reads, in one-letter code: Probable 5-dehydro-4-deoxyglucarate dehydratase (301 aa).

It belongs to the DapA family.

It carries out the reaction 5-dehydro-4-deoxy-D-glucarate + H(+) = 2,5-dioxopentanoate + CO2 + H2O. It functions in the pathway carbohydrate acid metabolism; D-glucarate degradation; 2,5-dioxopentanoate from D-glucarate: step 2/2. This is Probable 5-dehydro-4-deoxyglucarate dehydratase from Chelativorans sp. (strain BNC1).